The sequence spans 395 residues: Calcium sensing receptor, chloroplastic (395 aa).

Residues M1–L12 are compositionally biased toward low complexity. The segment at M1–W27 is disordered. The N-terminal 39 residues, M1 to A39, are a transit peptide targeting the chloroplast. Topologically, residues A40–Y182 are lumenal, thylakoid. The chain crosses the membrane as a helical span at residues V183–V203. Over S204–D395 the chain is Stromal. The 122-residue stretch at T224 to S345 folds into the Rhodanese domain. T377 is modified (phosphothreonine).

In terms of processing, phosphorylated in both bundle sheath and mesophyll cells, under both low and high light regimes (70 vs 900 umol photons/m-2/s).

It localises to the plastid. The protein localises to the chloroplast thylakoid membrane. Functionally, modulates cytoplasmic Ca(2+) concentration and is crucial for proper stomatal regulation in response to elevated levels of external Ca(2+). May function by regulating concentrations of inositol 1,4,5-trisphosphate (IP3), which in turn triggers release of Ca(2+) from internal stores. May play a role in de-etiolation. The protein is Calcium sensing receptor, chloroplastic of Zea mays (Maize).